Here is a 264-residue protein sequence, read N- to C-terminus: Cyclin-P1-1 (264 aa).

The disordered stretch occupies residues 1 to 25 (MDAAAAAGGEMSRQKATASAPPPPE).

Belongs to the cyclin family. Cyclin U/P subfamily.

The polypeptide is Cyclin-P1-1 (CYCP1-1) (Oryza sativa subsp. japonica (Rice)).